The following is a 418-amino-acid chain: Histidinol dehydrogenase (418 aa).

Positions 119, 180, and 203 each coordinate NAD(+). Residues threonine 226, glutamine 248, and histidine 251 each coordinate substrate. The Zn(2+) site is built by glutamine 248 and histidine 251. Catalysis depends on proton acceptor residues glutamate 316 and histidine 317. Histidine 317, aspartate 350, glutamate 404, and histidine 409 together coordinate substrate. Residue aspartate 350 coordinates Zn(2+). Histidine 409 contacts Zn(2+).

The protein belongs to the histidinol dehydrogenase family. It depends on Zn(2+) as a cofactor.

The enzyme catalyses L-histidinol + 2 NAD(+) + H2O = L-histidine + 2 NADH + 3 H(+). It participates in amino-acid biosynthesis; L-histidine biosynthesis; L-histidine from 5-phospho-alpha-D-ribose 1-diphosphate: step 9/9. Its function is as follows. Catalyzes the sequential NAD-dependent oxidations of L-histidinol to L-histidinaldehyde and then to L-histidine. This is Histidinol dehydrogenase from Staphylococcus aureus (strain MSSA476).